Consider the following 557-residue polypeptide: Enhancer of polycomb-like protein 1 (557 aa).

Disordered regions lie at residues 323–349 and 424–449; these read VKPA…RPQP and QSHN…TYST. A compositionally biased stretch (pro residues) spans 327 to 337; sequence APVPTPAPPVK. Positions 429 to 441 are enriched in low complexity; sequence LSIPSSTPSTPLS.

Belongs to the enhancer of polycomb family. As to quaternary structure, component of the NuA4 histone acetyltransferase complex.

Its subcellular location is the nucleus. Component of the NuA4 histone acetyltransferase complex which is involved in transcriptional activation of selected genes principally by acetylation of nucleosomal histone H4 and H2A. The NuA4 complex is also involved in DNA repair. Involved in gene silencing by neighboring heterochromatin, blockage of the silencing spreading along the chromosome, and required for cell cycle progression through G2/M. This is Enhancer of polycomb-like protein 1 (epl1) from Schizosaccharomyces pombe (strain 972 / ATCC 24843) (Fission yeast).